Consider the following 275-residue polypeptide: Large ribosomal subunit protein uL2c (275 aa).

The disordered stretch occupies residues methionine 225–lysine 252.

It belongs to the universal ribosomal protein uL2 family. In terms of assembly, part of the 50S ribosomal subunit.

It is found in the plastid. Its subcellular location is the chloroplast. In Guillardia theta (Cryptophyte), this protein is Large ribosomal subunit protein uL2c (rpl2).